A 128-amino-acid polypeptide reads, in one-letter code: Ribosome-binding factor A (128 aa).

This sequence belongs to the RbfA family. Monomer. Binds 30S ribosomal subunits, but not 50S ribosomal subunits or 70S ribosomes.

Its subcellular location is the cytoplasm. Functionally, one of several proteins that assist in the late maturation steps of the functional core of the 30S ribosomal subunit. Associates with free 30S ribosomal subunits (but not with 30S subunits that are part of 70S ribosomes or polysomes). Required for efficient processing of 16S rRNA. May interact with the 5'-terminal helix region of 16S rRNA. This is Ribosome-binding factor A from Acidithiobacillus ferrooxidans (strain ATCC 23270 / DSM 14882 / CIP 104768 / NCIMB 8455) (Ferrobacillus ferrooxidans (strain ATCC 23270)).